The primary structure comprises 179 residues: GTP-dependent dephospho-CoA kinase (179 aa).

Positions 50, 51, 52, 69, 71, and 126 each coordinate GTP.

Belongs to the GTP-dependent DPCK family.

The enzyme catalyses 3'-dephospho-CoA + GTP = GDP + CoA + H(+). It participates in cofactor biosynthesis; coenzyme A biosynthesis. In terms of biological role, catalyzes the GTP-dependent phosphorylation of the 3'-hydroxyl group of dephosphocoenzyme A to form coenzyme A (CoA). The protein is GTP-dependent dephospho-CoA kinase of Pyrococcus horikoshii (strain ATCC 700860 / DSM 12428 / JCM 9974 / NBRC 100139 / OT-3).